A 201-amino-acid polypeptide reads, in one-letter code: Holliday junction resolvase RecU (201 aa).

Mg(2+)-binding residues include Thr87, Asp89, Glu102, and Gln121.

This sequence belongs to the RecU family. Mg(2+) is required as a cofactor.

It is found in the cytoplasm. The enzyme catalyses Endonucleolytic cleavage at a junction such as a reciprocal single-stranded crossover between two homologous DNA duplexes (Holliday junction).. In terms of biological role, endonuclease that resolves Holliday junction intermediates in genetic recombination. Cleaves mobile four-strand junctions by introducing symmetrical nicks in paired strands. Promotes annealing of linear ssDNA with homologous dsDNA. Required for DNA repair, homologous recombination and chromosome segregation. This chain is Holliday junction resolvase RecU, found in Listeria welshimeri serovar 6b (strain ATCC 35897 / DSM 20650 / CCUG 15529 / CIP 8149 / NCTC 11857 / SLCC 5334 / V8).